A 357-amino-acid chain; its full sequence is A-type ATP synthase subunit C (357 aa).

The protein belongs to the V-ATPase V0D/AC39 subunit family. In terms of assembly, has multiple subunits with at least A(3), B(3), C, D, E, F, H, I and proteolipid K(x).

It is found in the cell membrane. Component of the A-type ATP synthase that produces ATP from ADP in the presence of a proton gradient across the membrane. This chain is A-type ATP synthase subunit C, found in Methanococcoides burtonii (strain DSM 6242 / NBRC 107633 / OCM 468 / ACE-M).